We begin with the raw amino-acid sequence, 165 residues long: Small ribosomal subunit protein uS5 (165 aa).

Residues Leu-10 to Val-73 form the S5 DRBM domain.

It belongs to the universal ribosomal protein uS5 family. As to quaternary structure, part of the 30S ribosomal subunit. Contacts proteins S4 and S8.

In terms of biological role, with S4 and S12 plays an important role in translational accuracy. Its function is as follows. Located at the back of the 30S subunit body where it stabilizes the conformation of the head with respect to the body. The polypeptide is Small ribosomal subunit protein uS5 (Clostridium perfringens (strain ATCC 13124 / DSM 756 / JCM 1290 / NCIMB 6125 / NCTC 8237 / Type A)).